The sequence spans 567 residues: Monodechloroaminopyrrolnitrin halogenase PrnC (567 aa).

It participates in antibiotic biosynthesis. Functionally, involved in the biosynthesis of the antifungal antibiotic pyrrolnitrin. Catalyzes the chlorination of monodechloroaminopyrrolnitrin (MDA) at the 3 position to form aminopyrrolnitrin (APRN). The polypeptide is Monodechloroaminopyrrolnitrin halogenase PrnC (prnC) (Pseudomonas fluorescens).